The chain runs to 613 residues: DNA mismatch repair protein MutL (613 aa).

The protein belongs to the DNA mismatch repair MutL/HexB family.

Its function is as follows. This protein is involved in the repair of mismatches in DNA. It is required for dam-dependent methyl-directed DNA mismatch repair. May act as a 'molecular matchmaker', a protein that promotes the formation of a stable complex between two or more DNA-binding proteins in an ATP-dependent manner without itself being part of a final effector complex. This is DNA mismatch repair protein MutL from Flavobacterium psychrophilum (strain ATCC 49511 / DSM 21280 / CIP 103535 / JIP02/86).